The chain runs to 190 residues: Putative triphosphatase YjbK (190 aa).

The region spanning glutamate 4–serine 189 is the CYTH domain.

The polypeptide is Putative triphosphatase YjbK (yjbK) (Bacillus subtilis (strain 168)).